Consider the following 320-residue polypeptide: Heptaprenyl diphosphate synthase component 2 (320 aa).

3 residues coordinate isopentenyl diphosphate: Lys-45, Arg-48, and His-77. Residues Asp-84 and Asp-88 each contribute to the Mg(2+) site. Arg-93 lines the all-trans-hexaprenyl diphosphate pocket. Arg-94 contributes to the isopentenyl diphosphate binding site. Lys-170, Thr-171, and Gln-208 together coordinate all-trans-hexaprenyl diphosphate.

Belongs to the FPP/GGPP synthase family. As to quaternary structure, heterodimer of component I and II. It depends on Mg(2+) as a cofactor.

The catalysed reaction is 4 isopentenyl diphosphate + (2E,6E)-farnesyl diphosphate = all-trans-heptaprenyl diphosphate + 4 diphosphate. In terms of biological role, supplies heptaprenyl diphosphate, the precursor for the side chain of the isoprenoid quinone menaquinone-7 (MQ-7). The polypeptide is Heptaprenyl diphosphate synthase component 2 (hepT) (Geobacillus stearothermophilus (Bacillus stearothermophilus)).